A 266-amino-acid chain; its full sequence is Small ribosomal subunit protein uS2 (266 aa).

Positions 238 to 266 are disordered; it reads EFASAPDAGKKGRQAQPKKGKRASDAAAE. A compositionally biased stretch (basic residues) spans 248–258; that stretch reads KGRQAQPKKGK.

This sequence belongs to the universal ribosomal protein uS2 family.

In Xylella fastidiosa (strain M12), this protein is Small ribosomal subunit protein uS2.